Consider the following 1252-residue polypeptide: Myosin-1 (1252 aa).

Residues 1–27 (MAPSKKAGKKVTPASKKSAGQGKVAKA) form a disordered region. Positions 38–712 (VGVSDMTLLT…TLFALETMRD (675 aa)) constitute a Myosin motor domain. Residue 128–135 (GESGAGKT) coordinates ATP. At Ser356 the chain carries Phosphoserine. An actin-binding region spans residues 403-485 (IIGILDIFGF…PGIFAALNDA (83 aa)). IQ domains are found at residues 716 to 736 (HNMA…KHEC) and 737 to 762 (ARRI…YGHQ). One can recognise a TH1 domain in the interval 770-953 (RRRFSLLSYR…TVHVASGEPP (184 aa)). Disordered regions lie at residues 945-1049 (VHVA…PETP) and 1103-1228 (PPKA…PATA). Composition is skewed to pro residues over residues 989-999 (RSVPKPKPVAQ) and 1028-1046 (RPPP…PAKP). Residues 1046–1104 (PETPMYRAKFAFEGQEGEMSLKKDDVVELVEKDDNGWWLVKMDGVEGWAPNNYLELVPP) enclose the SH3 domain. A compositionally biased stretch (polar residues) spans 1162–1175 (ADTTPASSRPSSAI). Residues 1178 to 1193 (KPPPPVAAKPKPPVIP) show a composition bias toward pro residues. Residues 1194–1203 (VKPSVSAKGP) are compositionally biased toward low complexity. The segment covering 1204–1215 (AKPPIPTAPRPP) has biased composition (pro residues). Over residues 1216–1228 (AASTSRSSKPATA) the composition is skewed to low complexity.

The protein belongs to the TRAFAC class myosin-kinesin ATPase superfamily. Myosin family. Post-translationally, phosphorylation of the TEDS site (Ser-356) is required for the polarization of the actin cytoskeleton. Phosphorylation probably activates the myosin-I ATPase activity.

It is found in the cytoplasm. The protein localises to the cytoskeleton. It localises to the actin patch. In terms of biological role, type-I myosin implicated in the organization of the actin cytoskeleton. Required for proper actin cytoskeleton polarization. At the cell cortex, assembles in patch-like structures together with proteins from the actin-polymerizing machinery and promotes actin assembly. Functions as actin nucleation-promoting factor (NPF) for the Arp2/3 complex. This chain is Myosin-1 (MYO1), found in Laccaria bicolor (strain S238N-H82 / ATCC MYA-4686) (Bicoloured deceiver).